Reading from the N-terminus, the 101-residue chain is Nucleoid-associated protein Bind_0255 (101 aa).

The protein belongs to the YbaB/EbfC family. In terms of assembly, homodimer.

The protein localises to the cytoplasm. It is found in the nucleoid. Its function is as follows. Binds to DNA and alters its conformation. May be involved in regulation of gene expression, nucleoid organization and DNA protection. The chain is Nucleoid-associated protein Bind_0255 from Beijerinckia indica subsp. indica (strain ATCC 9039 / DSM 1715 / NCIMB 8712).